The primary structure comprises 300 residues: Peroxisomal 2,4-dienoyl-CoA reductase [(3E)-enoyl-CoA-producing] (300 aa).

NADP(+)-binding positions include 42-47, 67-71, and aspartate 93; these read GGGSGI and RNLEK. Arginine 67 contacts substrate. Residues arginine 95, phenylalanine 125, and 133–135 contribute to the substrate site; that span reads SFN. NADP(+) contacts are provided by residues lysine 189 and 215 to 221; that span reads PGPISGT. Arginine 226 contributes to the substrate binding site. The short motif at 298–300 is the Microbody targeting signal element; that stretch reads AKL.

This sequence belongs to the short-chain dehydrogenases/reductases (SDR) family. 2,4-dienoyl-CoA reductase subfamily. In terms of assembly, monomer, dimer and oligomer.

It localises to the peroxisome. It catalyses the reaction a (2E,4Z)-dienoyl-CoA + NADPH + H(+) = a 4,5-saturated-(3E)-enoyl-CoA + NADP(+). The catalysed reaction is a (2E,4E)-dienoyl-CoA + NADPH + H(+) = a 4,5-saturated-(3E)-enoyl-CoA + NADP(+). The enzyme catalyses (2E,4E)-hexadienoyl-CoA + NADPH + H(+) = (3E)-hexenoyl-CoA + NADP(+). It carries out the reaction (2E,4E)-decadienoyl-CoA + NADPH + H(+) = (3E)-decenoyl-CoA + NADP(+). It catalyses the reaction (2E,4Z,7Z,10Z,13Z,16Z,19Z)-docosaheptaenoyl-CoA + NADPH + H(+) = (3E,7Z,10Z,13Z,16Z,19Z)-docosahexaenoyl-CoA + NADP(+). In terms of biological role, auxiliary enzyme of beta-oxidation. Participates in the degradation of unsaturated fatty enoyl-CoA esters having double bonds in both even- and odd-numbered positions in peroxisome. Catalyzes the NADP-dependent reduction of 2,4-dienoyl-CoA to yield trans-3-enoyl-CoA. This is Peroxisomal 2,4-dienoyl-CoA reductase [(3E)-enoyl-CoA-producing] (decr2) from Danio rerio (Zebrafish).